Reading from the N-terminus, the 43-residue chain is Photosystem I reaction center subunit IX (43 aa).

The helical transmembrane segment at 7-27 (YLSTAPVLSTIWFGSLAGLLI) threads the bilayer.

This sequence belongs to the PsaJ family.

The protein localises to the plastid. It localises to the chloroplast thylakoid membrane. Functionally, may help in the organization of the PsaE and PsaF subunits. This Vitis vinifera (Grape) protein is Photosystem I reaction center subunit IX.